We begin with the raw amino-acid sequence, 94 residues long: MIKSELFERIAEQKINISNKMIERAAKEMLEHMIISLANGKRIEIRGFGSFSLHYRSSRIGRNPKTGKSVKLNEKYVPYFKPGKKLRDRANIHK.

The protein belongs to the bacterial histone-like protein family. Heterodimer of an alpha and a beta chain.

Its function is as follows. This protein is one of the two subunits of integration host factor, a specific DNA-binding protein that functions in genetic recombination as well as in transcriptional and translational control. This is Integration host factor subunit beta from Buchnera aphidicola subsp. Acyrthosiphon pisum (strain 5A).